Here is a 563-residue protein sequence, read N- to C-terminus: Methylcrotonoyl-CoA carboxylase beta chain, mitochondrial (563 aa).

The transit peptide at Met1–Ala22 directs the protein to the mitochondrion. Residues Met49 to Pro306 enclose the CoA carboxyltransferase N-terminal domain. The segment at Met49–Arg555 is carboxyltransferase. Lys70 bears the N6-acetyllysine; alternate mark. Lys70 carries the N6-succinyllysine; alternate modification. Lys141 bears the N6-succinyllysine mark. The region spanning Glu309–Arg555 is the CoA carboxyltransferase C-terminal domain. The segment at Arg343 to Asn372 is acyl-CoA binding. Lys433 carries the post-translational modification N6-succinyllysine. Lys495 carries the post-translational modification N6-acetyllysine; alternate. An N6-succinyllysine; alternate modification is found at Lys495. Lys511 bears the N6-acetyllysine mark.

This sequence belongs to the AccD/PCCB family. Probably a dodecamer composed of six biotin-containing alpha subunits (MCCC1) and six beta (MCCC2) subunits.

Its subcellular location is the mitochondrion matrix. The catalysed reaction is 3-methylbut-2-enoyl-CoA + hydrogencarbonate + ATP = 3-methyl-(2E)-glutaconyl-CoA + ADP + phosphate + H(+). It functions in the pathway amino-acid degradation; L-leucine degradation; (S)-3-hydroxy-3-methylglutaryl-CoA from 3-isovaleryl-CoA: step 2/3. Its function is as follows. Carboxyltransferase subunit of the 3-methylcrotonyl-CoA carboxylase, an enzyme that catalyzes the conversion of 3-methylcrotonyl-CoA to 3-methylglutaconyl-CoA, a critical step for leucine and isovaleric acid catabolism. This is Methylcrotonoyl-CoA carboxylase beta chain, mitochondrial (Mccc2) from Rattus norvegicus (Rat).